Consider the following 124-residue polypeptide: UPF0102 protein Msil_0293 (124 aa).

It belongs to the UPF0102 family.

The sequence is that of UPF0102 protein Msil_0293 from Methylocella silvestris (strain DSM 15510 / CIP 108128 / LMG 27833 / NCIMB 13906 / BL2).